Reading from the N-terminus, the 724-residue chain is Hyaluronan mediated motility receptor (724 aa).

2 disordered regions span residues 1-22 (MSFP…PSPG) and 40-81 (KSQR…QKND). At Ser20 the chain carries Phosphoserine. 2 stretches are compositionally biased toward basic and acidic residues: residues 46–60 (QQKE…DKDT) and 70–81 (KSSESKESQKND). N-linked (GlcNAc...) asparagine glycosylation is found at Asn133, Asn477, Asn567, and Asn588. The tract at residues 365-546 (EEMVKEKNLF…ITDLQNQLKQ (182 aa)) is required for interaction with FAM83D. 2 hyaluronic acid-binding regions span residues 635–645 (KQKIKHVVKLK) and 657–666 (KLRCQLAKKK). Phosphothreonine is present on Thr703.

In terms of assembly, interacts with ANKRD26. Interacts with DYNLL1. Interacts with FAM83D/CHICA. Expressed in testis. Expressed in the breast.

Its subcellular location is the cell surface. It is found in the cytoplasm. The protein localises to the cytoskeleton. The protein resides in the spindle. Receptor for hyaluronic acid (HA). Involved in cell motility. When hyaluronan binds to HMMR, the phosphorylation of a number of proteins, including PTK2/FAK1 occurs. May also be involved in cellular transformation and metastasis formation, and in regulating extracellular-regulated kinase (ERK) activity. May act as a regulator of adipogenisis. This Homo sapiens (Human) protein is Hyaluronan mediated motility receptor (HMMR).